A 115-amino-acid chain; its full sequence is uncharacterized protein (115 aa).

Residues 1–20 form the signal peptide; the sequence is MKTFFRTVLFGSLMAVCANS.

This is an uncharacterized protein from Escherichia coli O6:H1 (strain CFT073 / ATCC 700928 / UPEC).